We begin with the raw amino-acid sequence, 492 residues long: Malonyl-CoA decarboxylase, mitochondrial (492 aa).

The transit peptide at 1–38 (MRGLGPSLRARRLLPLRYPPRPPGPRGPRLCSGLTASA) directs the protein to the mitochondrion. Residues 39-189 (MDELLRRAVP…VLKSMLSEWF (151 aa)) are alpha-helical domain. At Lys-58 the chain carries N6-acetyllysine. Lys-167 is modified (N6-acetyllysine; alternate). An N6-succinyllysine; alternate modification is found at Lys-167. A catalytic domain region spans residues 190 to 492 (SSGFLNLERV…VAQFQSNSKL (303 aa)). The residue at position 210 (Lys-210) is an N6-acetyllysine. An N6-succinyllysine modification is found at Lys-221. 298 to 304 (QGVELGT) provides a ligand contact to malonyl-CoA. At Lys-316 the chain carries N6-acetyllysine. Ser-328 lines the malonyl-CoA pocket. Ser-328 functions as the Proton acceptor in the catalytic mechanism. Lys-385 is subject to N6-acetyllysine; alternate. Position 385 is an N6-succinyllysine; alternate (Lys-385). Position 388 is an N6-acetyllysine (Lys-388). A malonyl-CoA-binding site is contributed by His-422. The active-site Proton donor is the His-422. N6-acetyllysine is present on residues Lys-441 and Lys-471. The Microbody targeting signal motif lies at 490–492 (SKL).

As to quaternary structure, homotetramer. Dimer of dimers. The two subunits within a dimer display conformational differences suggesting that at any given moment, only one of the two subunits is competent for malonyl-CoA binding and catalytic activity. Under oxidizing conditions, can form disulfide-linked homotetramers (in vitro). Associates with the peroxisomal targeting signal receptor PEX5. Post-translationally, acetylation at Lys-471 activates malonyl-CoA decarboxylase activity. Deacetylation at Lys-471 by SIRT4 represses activity, leading to promote lipogenesis. Interchain disulfide bonds may form in peroxisomes (Potential). Interchain disulfide bonds are not expected to form in the reducing environment of the cytoplasm and mitochondria. Expressed in liver, heart, skeletal muscles and adipose tissues (at protein level). Ubiquitous. Strongly expressed in liver, kidney, heart, skeletal muscle and adipose tissues. Weakly expressed in brain.

It is found in the cytoplasm. The protein resides in the mitochondrion matrix. Its subcellular location is the peroxisome. The protein localises to the peroxisome matrix. It carries out the reaction malonyl-CoA + H(+) = acetyl-CoA + CO2. The protein operates within metabolic intermediate biosynthesis; acetyl-CoA biosynthesis; acetyl-CoA from malonyl-CoA: step 1/1. Malonyl-CoA decarboxylase activity does not require any cofactors or divalent metal ions. Catalyzes the conversion of malonyl-CoA to acetyl-CoA. In the fatty acid biosynthesis MCD selectively removes malonyl-CoA and thus assures that methyl-malonyl-CoA is the only chain elongating substrate for fatty acid synthase and that fatty acids with multiple methyl side chains are produced. In peroxisomes it may be involved in degrading intraperoxisomal malonyl-CoA, which is generated by the peroxisomal beta-oxidation of odd chain-length dicarboxylic fatty acids. Plays a role in the metabolic balance between glucose and lipid oxidation in muscle independent of alterations in insulin signaling. May play a role in controlling the extent of ischemic injury by promoting glucose oxidation. The polypeptide is Malonyl-CoA decarboxylase, mitochondrial (Rattus norvegicus (Rat)).